A 75-amino-acid chain; its full sequence is MRLVVCLVFLASFALVCQGQGYKGPYTRPILRPYVRPVVSYNVCTLSCRGITTTQARSCCTRLGRCCHVAKGYSG.

The N-terminal stretch at 1 to 19 (MRLVVCLVFLASFALVCQG) is a signal peptide. Q20 bears the Pyrrolidone carboxylic acid mark. Disulfide bonds link C44-C59, C48-C66, and C60-C67. S74 carries the post-translational modification Serine amide.

The protein belongs to the penaeidin family.

It is found in the cytoplasmic granule. Antibacterial and antifungal activity. Presents chitin-binding activity. This Penaeus setiferus (Atlantic white shrimp) protein is Penaeidin-3l.